We begin with the raw amino-acid sequence, 298 residues long: ADP/ATP translocase 1 (298 aa).

Residues 1–7 are Mitochondrial intermembrane-facing; that stretch reads MSDQALS. S2 bears the N-acetylserine mark. The Solcar 1 repeat unit spans residues 6–98; the sequence is LSFLKDFLAG…FAFKDKYKQI (93 aa). The residue at position 7 (S7) is a Phosphoserine. The helical transmembrane segment at 8-37 threads the bilayer; sequence FLKDFLAGGVAAAVSKTAVAPIERVKLLLQ. The Mitochondrial matrix segment spans residues 38–74; the sequence is VQHASKQISAEKQYKGIIDCVVRIPKEQGFLSFWRGN. K52 is modified (N6,N6,N6-trimethyllysine). A helical membrane pass occupies residues 75–99; that stretch reads LANVIRYFPTQALNFAFKDKYKQIF. The ADP site is built by R80 and K92. Topologically, residues 100–109 are mitochondrial intermembrane; that stretch reads LGGVDRHKQF. Residues 110–130 traverse the membrane as a helical segment; it reads WRYFAGNLASGGAAGATSLCF. 2 Solcar repeats span residues 111-201 and 212-297; these read RYFA…AKGM and VSWM…IKKY. Residues 131-178 lie on the Mitochondrial matrix side of the membrane; it reads VYPLDFARTRLAADVGKGAAQREFSGLGNCLTKIFKSDGLRGLYQGFN. Residue K147 is modified to N6-succinyllysine. An S-nitrosocysteine modification is found at C160. A helical transmembrane segment spans residues 179-199; that stretch reads VSVQGIIIYRAAYFGVYDTAK. The Mitochondrial intermembrane portion of the chain corresponds to 200 to 210; the sequence is GMLPDPKNVHI. Residues 211 to 231 traverse the membrane as a helical segment; sequence IVSWMIAQTVTAVAGLVSYPF. The Mitochondrial matrix segment spans residues 232–273; sequence DTVRRRMMMQSGRKGADIMYTGTVDCWKKIAKDEGAKAFFKG. An ADP-binding site is contributed by R235. The important for transport activity stretch occupies residues 235-240; that stretch reads RRRMMM. Positions 235-240 match the Nucleotide carrier signature motif motif; the sequence is RRRMMM. Residues K245 and K272 each carry the N6-succinyllysine modification. A helical membrane pass occupies residues 274–291; sequence AWSNVLRGMGGAFVLVLY. At 292–298 the chain is on the mitochondrial intermembrane side; the sequence is DEIKKYV.

It belongs to the mitochondrial carrier (TC 2.A.29) family. Monomer. Found in a complex with ARL2, ARL2BP and SLC25A4/ANT1. Interacts with ARL2BP. Interacts with TIMM44; leading to inhibit the presequence translocase TIMM23, thereby promoting stabilization of PINK1. In terms of processing, under cell death induction, transglutaminated by TGM2. Transglutamination leads to formation of covalent cross-links between a glutamine and the epsilon-amino group of a lysine residue, forming polymers.

The protein localises to the mitochondrion inner membrane. Its subcellular location is the membrane. It carries out the reaction ADP(in) + ATP(out) = ADP(out) + ATP(in). It catalyses the reaction H(+)(in) = H(+)(out). With respect to regulation, the matrix-open state (m-state) is inhibited by the membrane-permeable bongkrekic acid (BKA). The cytoplasmic-open state (c-state) is inhibited by the membrane-impermeable toxic inhibitor carboxyatractyloside (CATR). Proton transporter activity is inhibited by ADP:ATP antiporter activity. Functionally, ADP:ATP antiporter that mediates import of ADP into the mitochondrial matrix for ATP synthesis, and export of ATP out to fuel the cell. Cycles between the cytoplasmic-open state (c-state) and the matrix-open state (m-state): operates by the alternating access mechanism with a single substrate-binding site intermittently exposed to either the cytosolic (c-state) or matrix (m-state) side of the inner mitochondrial membrane. In addition to its ADP:ATP antiporter activity, also involved in mitochondrial uncoupling and mitochondrial permeability transition pore (mPTP) activity. Plays a role in mitochondrial uncoupling by acting as a proton transporter: proton transport uncouples the proton flows via the electron transport chain and ATP synthase to reduce the efficiency of ATP production and cause mitochondrial thermogenesis. Proton transporter activity is inhibited by ADP:ATP antiporter activity, suggesting that SLC25A4/ANT1 acts as a master regulator of mitochondrial energy output by maintaining a delicate balance between ATP production (ADP:ATP antiporter activity) and thermogenesis (proton transporter activity). Proton transporter activity requires free fatty acids as cofactor, but does not transport it. Probably mediates mitochondrial uncoupling in tissues that do not express UCP1. Also plays a key role in mPTP opening, a non-specific pore that enables free passage of the mitochondrial membranes to solutes of up to 1.5 kDa, and which contributes to cell death. It is however unclear if SLC25A4/ANT1 constitutes a pore-forming component of mPTP or regulates it. Acts as a regulator of mitophagy independently of ADP:ATP antiporter activity: promotes mitophagy via interaction with TIMM44, leading to inhibit the presequence translocase TIMM23, thereby promoting stabilization of PINK1. This chain is ADP/ATP translocase 1, found in Oryctolagus cuniculus (Rabbit).